A 414-amino-acid chain; its full sequence is Gamma-glutamyl phosphate reductase (414 aa).

This sequence belongs to the gamma-glutamyl phosphate reductase family.

Its subcellular location is the cytoplasm. The enzyme catalyses L-glutamate 5-semialdehyde + phosphate + NADP(+) = L-glutamyl 5-phosphate + NADPH + H(+). It participates in amino-acid biosynthesis; L-proline biosynthesis; L-glutamate 5-semialdehyde from L-glutamate: step 2/2. Functionally, catalyzes the NADPH-dependent reduction of L-glutamate 5-phosphate into L-glutamate 5-semialdehyde and phosphate. The product spontaneously undergoes cyclization to form 1-pyrroline-5-carboxylate. The sequence is that of Gamma-glutamyl phosphate reductase from Xanthomonas campestris pv. campestris (strain 8004).